The chain runs to 277 residues: Phosphoenolpyruvate synthase regulatory protein (277 aa).

Residue 157 to 164 (GVSRCGKT) participates in ADP binding.

Belongs to the pyruvate, phosphate/water dikinase regulatory protein family. PSRP subfamily.

It carries out the reaction [pyruvate, water dikinase] + ADP = [pyruvate, water dikinase]-phosphate + AMP + H(+). The catalysed reaction is [pyruvate, water dikinase]-phosphate + phosphate + H(+) = [pyruvate, water dikinase] + diphosphate. In terms of biological role, bifunctional serine/threonine kinase and phosphorylase involved in the regulation of the phosphoenolpyruvate synthase (PEPS) by catalyzing its phosphorylation/dephosphorylation. In Salmonella agona (strain SL483), this protein is Phosphoenolpyruvate synthase regulatory protein.